A 362-amino-acid polypeptide reads, in one-letter code: Probable cinnamyl alcohol dehydrogenase 9 (362 aa).

C45 lines the Zn(2+) pocket. S47 is an NADP(+) binding site. Zn(2+) is bound by residues H67, E68, C98, C101, C104, C112, and C167. Residues T171, 192-197 (GLGGLG), 215-220 (STSPWK), T255, G279, and 302-304 (SMI) contribute to the NADP(+) site.

It belongs to the zinc-containing alcohol dehydrogenase family. As to quaternary structure, homodimer. The cofactor is Zn(2+).

It carries out the reaction (E)-cinnamyl alcohol + NADP(+) = (E)-cinnamaldehyde + NADPH + H(+). The enzyme catalyses (E)-coniferol + NADP(+) = (E)-coniferaldehyde + NADPH + H(+). It catalyses the reaction (E)-sinapyl alcohol + NADP(+) = (E)-sinapaldehyde + NADPH + H(+). The catalysed reaction is (E)-4-coumaroyl alcohol + NADP(+) = (E)-4-coumaraldehyde + NADPH + H(+). It carries out the reaction (E)-caffeyl alcohol + NADP(+) = (E)-caffeyl aldehyde + NADPH + H(+). It functions in the pathway aromatic compound metabolism; phenylpropanoid biosynthesis. Functionally, involved in lignin biosynthesis. Catalyzes the final step specific for the production of lignin monomers. Catalyzes the NADPH-dependent reduction of coniferaldehyde, 5-hydroxyconiferaldehyde, sinapaldehyde, 4-coumaraldehyde and caffeyl aldehyde to their respective alcohols. In Oryza sativa subsp. japonica (Rice), this protein is Probable cinnamyl alcohol dehydrogenase 9.